The sequence spans 179 residues: Large ribosomal subunit protein uL5 (179 aa).

This sequence belongs to the universal ribosomal protein uL5 family. Part of the 50S ribosomal subunit; part of the 5S rRNA/L5/L18/L25 subcomplex. Contacts the 5S rRNA and the P site tRNA. Forms a bridge to the 30S subunit in the 70S ribosome.

In terms of biological role, this is one of the proteins that bind and probably mediate the attachment of the 5S RNA into the large ribosomal subunit, where it forms part of the central protuberance. In the 70S ribosome it contacts protein S13 of the 30S subunit (bridge B1b), connecting the 2 subunits; this bridge is implicated in subunit movement. Contacts the P site tRNA; the 5S rRNA and some of its associated proteins might help stabilize positioning of ribosome-bound tRNAs. The protein is Large ribosomal subunit protein uL5 of Edwardsiella ictaluri (strain 93-146).